A 481-amino-acid chain; its full sequence is Innexin inx6 (481 aa).

Over 1-21 (MYAAVKPLSNYLRLKTVRIYD) the chain is Cytoplasmic. The helical transmembrane segment at 22–42 (PIFTLHSKCTIVILLTCTFLL) threads the bilayer. At 43-144 (SAKQYFGEPI…VTKRMYLRYY (102 aa)) the chain is on the extracellular side. A helical membrane pass occupies residues 145-165 (QWVFMILLFQSLLFYFPSFLW). Residues 166 to 220 (KVWEGQRMEQLCCEVGDALIVEATYRTRLQMLTRYFRAQFAPIHWCYSIKYAFCE) lie on the Cytoplasmic side of the membrane. Residues 221–241 (LLNVFISILNFWLMDVVFNGF) form a helical membrane-spanning segment. The Extracellular portion of the chain corresponds to 242–302 (WYKYIHALAA…VLPLNILNEK (61 aa)). The helical transmembrane segment at 303 to 323 (IFAVLYVWFLFIALLAIMNIL) threads the bilayer. Over 324–481 (YRLLVICCPE…MDRFFHESHA (158 aa)) the chain is Cytoplasmic.

This sequence belongs to the pannexin family. Uniform expression in the imaginal wing disk. Expressed in an outer layer of the pupal developing CNS. Also expressed in pupal retina: cone cells and primary pigment cells.

Its subcellular location is the cell membrane. It is found in the cell junction. The protein resides in the gap junction. In terms of biological role, structural components of the gap junctions. The protein is Innexin inx6 (Inx6) of Drosophila melanogaster (Fruit fly).